A 525-amino-acid chain; its full sequence is Probable alpha-galactosidase A (525 aa).

A signal peptide spans 1–17; sequence MHPSMTLLAILPPLVRA. An intrachain disulfide couples C40 to C72. Residues N43, N81, and N117 are each glycosylated (N-linked (GlcNAc...) asparagine). C120 and C150 form a disulfide bridge. The Nucleophile role is filled by D148. N-linked (GlcNAc...) asparagine glycosylation is present at N197. D206 (proton donor) is an active-site residue. The Ricin B-type lectin domain occupies 402-525; that stretch reads PPDCPMVIPT…GLPSGVDIEA (124 aa). 2 disulfide bridges follow: C422-C434 and C459-C472.

This sequence belongs to the glycosyl hydrolase 27 family.

It localises to the secreted. It carries out the reaction Hydrolysis of terminal, non-reducing alpha-D-galactose residues in alpha-D-galactosides, including galactose oligosaccharides, galactomannans and galactolipids.. Functionally, hydrolyzes a variety of simple alpha-D-galactoside as well as more complex molecules such as oligosaccharides and polysaccharides. In Aspergillus clavatus (strain ATCC 1007 / CBS 513.65 / DSM 816 / NCTC 3887 / NRRL 1 / QM 1276 / 107), this protein is Probable alpha-galactosidase A (aglA).